A 355-amino-acid polypeptide reads, in one-letter code: NADH-quinone oxidoreductase subunit H (355 aa).

A run of 8 helical transmembrane segments spans residues 17–37 (IIMVAESVLVLVVLLVAIAYI), 86–106 (GVFLLAPLVSCVLALAAWAVI), 119–139 (VGILFIFAISSLSIYGIIMAG), 165–185 (IGFVIITVLLCAGTLNLSAVV), 204–224 (ILNWYVWPLFPMFVVFYVSAL), 262–282 (YVAIVTMCAMATILFLGGWLP), 291–311 (WVPGIIWFLLKVFFMFFLFAM), and 332–352 (FLPLSLAMVIVVAGVLHFAGI).

It belongs to the complex I subunit 1 family. As to quaternary structure, NDH-1 is composed of 14 different subunits. Subunits NuoA, H, J, K, L, M, N constitute the membrane sector of the complex.

The protein resides in the cell inner membrane. It catalyses the reaction a quinone + NADH + 5 H(+)(in) = a quinol + NAD(+) + 4 H(+)(out). Its function is as follows. NDH-1 shuttles electrons from NADH, via FMN and iron-sulfur (Fe-S) centers, to quinones in the respiratory chain. The immediate electron acceptor for the enzyme in this species is believed to be ubiquinone. Couples the redox reaction to proton translocation (for every two electrons transferred, four hydrogen ions are translocated across the cytoplasmic membrane), and thus conserves the redox energy in a proton gradient. This subunit may bind ubiquinone. This is NADH-quinone oxidoreductase subunit H from Bradyrhizobium diazoefficiens (strain JCM 10833 / BCRC 13528 / IAM 13628 / NBRC 14792 / USDA 110).